Consider the following 413-residue polypeptide: Na(+)/H(+) antiporter NhaA (413 aa).

11 consecutive transmembrane segments (helical) span residues 15–35 (LESG…ALFV), 57–77 (LLHW…GLEI), 93–113 (ALPC…YASL), 123–143 (GWAI…SLLG), 152–172 (IFLA…IAVF), 175–195 (AELN…LLGF), 211–231 (VALW…GVVL), 261–281 (WVAF…SFAG), 295–315 (VALG…WLAI), 333–353 (GVSL…LLAF), and 364–384 (VGVL…LSLT).

The protein belongs to the NhaA Na(+)/H(+) (TC 2.A.33) antiporter family.

It localises to the cell inner membrane. It carries out the reaction Na(+)(in) + 2 H(+)(out) = Na(+)(out) + 2 H(+)(in). Na(+)/H(+) antiporter that extrudes sodium in exchange for external protons. This is Na(+)/H(+) antiporter NhaA from Caulobacter vibrioides (strain ATCC 19089 / CIP 103742 / CB 15) (Caulobacter crescentus).